We begin with the raw amino-acid sequence, 503 residues long: MDFSIKGCDWSKGEAKGFLTGKSDCIVLGIFEAQTLSGAALDIDTATKGLISRVVKAGDMDGKRGKTLFLHEVSGIGASRVLLVGLGKQDAFNQKAYNDAATTAWRALLATKVVQVTFSLAQLPVDERSSDWGVRAAILALRNETYRFTQMKSKPEPASHTLKRVVFSVDPADEKAAKVAIKQAVALANGMDLTRDLGNLPGNVCTPIYLGNTAKKIAKDWGLKAEVLGLKQIQALKMGSFLSVARASVEPPQFIVLHYQGAAAKAAPVVLVGKGITFDTGGISLKPGEGMDEMKYDMCGAGSVLGTMRAVAEMGLKINVVAIVPTCENMPGGNATKPGDIVTSMKGLTIEVLNTDAEGRLILCDALTYAERFKPAAVIDVATLTGACVIALGGHNSGLFSTNDALAGELLDASREANDPAWRMPLDDEYQDQLKSNFADLANIGGRPAGAVTAACFLSRFTESYPWAHLDIAGTAWKGGAAKGATGRPVPLLAQFLIDRAGQ.

The Mn(2+) site is built by Lys-274 and Asp-279. The active site involves Lys-286. Mn(2+)-binding residues include Asp-297, Asp-356, and Glu-358. The active site involves Arg-360.

It belongs to the peptidase M17 family. Mn(2+) serves as cofactor.

The protein localises to the cytoplasm. It carries out the reaction Release of an N-terminal amino acid, Xaa-|-Yaa-, in which Xaa is preferably Leu, but may be other amino acids including Pro although not Arg or Lys, and Yaa may be Pro. Amino acid amides and methyl esters are also readily hydrolyzed, but rates on arylamides are exceedingly low.. The catalysed reaction is Release of an N-terminal amino acid, preferentially leucine, but not glutamic or aspartic acids.. Functionally, presumably involved in the processing and regular turnover of intracellular proteins. Catalyzes the removal of unsubstituted N-terminal amino acids from various peptides. This chain is Probable cytosol aminopeptidase, found in Burkholderia orbicola (strain AU 1054).